The primary structure comprises 96 residues: Putative membrane protein insertion efficiency factor (96 aa).

Belongs to the UPF0161 family.

The protein resides in the cell inner membrane. Functionally, could be involved in insertion of integral membrane proteins into the membrane. This is Putative membrane protein insertion efficiency factor from Borreliella afzelii (strain PKo) (Borrelia afzelii).